We begin with the raw amino-acid sequence, 384 residues long: Spermidine/putrescine import ATP-binding protein PotA (384 aa).

The region spanning 6-238 (IAFQNVSKVF…PINHFVATFI (233 aa)) is the ABC transporter domain. An ATP-binding site is contributed by 40–47 (GASGSGKS).

This sequence belongs to the ABC transporter superfamily. Spermidine/putrescine importer (TC 3.A.1.11.1) family. In terms of assembly, the complex is composed of two ATP-binding proteins (PotA), two transmembrane proteins (PotB and PotC) and a solute-binding protein (PotD).

It localises to the cell membrane. The enzyme catalyses ATP + H2O + polyamine-[polyamine-binding protein]Side 1 = ADP + phosphate + polyamineSide 2 + [polyamine-binding protein]Side 1.. Functionally, part of the ABC transporter complex PotABCD involved in spermidine/putrescine import. Responsible for energy coupling to the transport system. The polypeptide is Spermidine/putrescine import ATP-binding protein PotA (Streptococcus thermophilus (strain ATCC BAA-250 / LMG 18311)).